The primary structure comprises 201 residues: LexA repressor (201 aa).

Positions 28-48 form a DNA-binding region, H-T-H motif; the sequence is LREIGGHLGINGTLGVMKHLD. Residues Ser120 and Lys157 each act as for autocatalytic cleavage activity in the active site.

This sequence belongs to the peptidase S24 family. In terms of assembly, homodimer.

It catalyses the reaction Hydrolysis of Ala-|-Gly bond in repressor LexA.. Represses a number of genes involved in the response to DNA damage (SOS response), including recA and lexA. In the presence of single-stranded DNA, RecA interacts with LexA causing an autocatalytic cleavage which disrupts the DNA-binding part of LexA, leading to derepression of the SOS regulon and eventually DNA repair. The chain is LexA repressor from Geotalea uraniireducens (strain Rf4) (Geobacter uraniireducens).